A 711-amino-acid polypeptide reads, in one-letter code: MTTKNLLVELFVEELPPKALKKLGDAFAGVLAEQLKALGLATAESVVTAYASPRRLAAHISHVWLKADDKAVQQKLMPVSVGLDSAGHATPALLKRLQALGADLSDPVAAVAALKRAPDGKAEALFYNSLVTGATLDTGLQKALEEAIAKLPIPKVMSYQLETDCELPGWTSVNFVRPAHGLVALHGSTVVPVKVLGLKAGNSTRGHRFEAAVDPVVLADADSYAVTLEIDGAVIASFAQRKAEIARQLAEAAAELGGGVQPIEDDALLDEVTALVERPNVLVCEFEKEFLDVPQECLILTMKANQKYFPLLDAAGKLTNKFLVVSNISPEDASFVIGGNERVVRPRLADAKFFFDQDRKRTLASRVEGLGKVVYHNKLGTQGERTERVAEIAVKIAQLLEGDALAGKAGKAAWLAKADLLTDMVGEFPELQGTMGRYYALHDGHSAEIAAAIEDHYKPRFAGDELPRNPVGVVVALADKLETLVGMFGIGNLPTGDKDPFALRRHALGVIRMLVEKDLPLDLGALVGGAAPVFGDKITDATPALLDFIYDRLSGSLREQGYSAQEVDSVVSQKPQRLGDVPKRLAAVRAFAALPEAPALAAANKRIGNILKKEALEVDPHVSELLLREAAEIALYAAMRDVVPTANAQFDTGDYTASLQTLAALRAPVDAFFDGVMVNAEELDLRLNRQGLLKSLHNAMNRVADLSRLVA.

This sequence belongs to the class-II aminoacyl-tRNA synthetase family. In terms of assembly, tetramer of two alpha and two beta subunits.

The protein localises to the cytoplasm. The enzyme catalyses tRNA(Gly) + glycine + ATP = glycyl-tRNA(Gly) + AMP + diphosphate. The sequence is that of Glycine--tRNA ligase beta subunit from Polaromonas naphthalenivorans (strain CJ2).